Here is a 670-residue protein sequence, read N- to C-terminus: UvrABC system protein B (670 aa).

One can recognise a Helicase ATP-binding domain in the interval 26-183 (EGLEDGLAHQ…RRLAELQYAR (158 aa)). 39-46 (GVTGSGKT) contacts ATP. The short motif at 92–115 (YYDYYQPEAYVPSSDTFIEKDAAV) is the Beta-hairpin element. One can recognise a Helicase C-terminal domain in the interval 431–597 (QVDDLLSEIR…GLNKKVSDVL (167 aa)). The 36-residue stretch at 630–665 (DQKIRELEAQMYTHAQNLEFELAAGLRDEIHQLREQ) folds into the UVR domain.

This sequence belongs to the UvrB family. In terms of assembly, forms a heterotetramer with UvrA during the search for lesions. Interacts with UvrC in an incision complex.

The protein localises to the cytoplasm. The UvrABC repair system catalyzes the recognition and processing of DNA lesions. A damage recognition complex composed of 2 UvrA and 2 UvrB subunits scans DNA for abnormalities. Upon binding of the UvrA(2)B(2) complex to a putative damaged site, the DNA wraps around one UvrB monomer. DNA wrap is dependent on ATP binding by UvrB and probably causes local melting of the DNA helix, facilitating insertion of UvrB beta-hairpin between the DNA strands. Then UvrB probes one DNA strand for the presence of a lesion. If a lesion is found the UvrA subunits dissociate and the UvrB-DNA preincision complex is formed. This complex is subsequently bound by UvrC and the second UvrB is released. If no lesion is found, the DNA wraps around the other UvrB subunit that will check the other stand for damage. The protein is UvrABC system protein B of Serratia proteamaculans (strain 568).